The following is a 149-amino-acid chain: Large ribosomal subunit protein uL13 (149 aa).

This sequence belongs to the universal ribosomal protein uL13 family. Part of the 50S ribosomal subunit.

Its function is as follows. This protein is one of the early assembly proteins of the 50S ribosomal subunit, although it is not seen to bind rRNA by itself. It is important during the early stages of 50S assembly. This chain is Large ribosomal subunit protein uL13, found in Thermosipho africanus (strain TCF52B).